The sequence spans 312 residues: NAD-dependent protein deacylase Sirt4 (312 aa).

The transit peptide at 1–16 (MRVGQLLRFRSTSLRS) directs the protein to the mitochondrion. Residues 28–312 (KPVVEDDIKR…FDFRNSKSVS (285 aa)) enclose the Deacetylase sirtuin-type domain. NAD(+) contacts are provided by residues 53–73 (GAGI…VGLY) and 134–137 (QNVD). Catalysis depends on histidine 152, which acts as the Proton acceptor. The Zn(2+) site is built by cysteine 160, cysteine 163, cysteine 211, and cysteine 214. Residues 251-253 (GSS), 277-279 (NIG), and cysteine 295 contribute to the NAD(+) site.

Belongs to the sirtuin family. Class II subfamily. Zn(2+) is required as a cofactor.

The protein localises to the mitochondrion matrix. The enzyme catalyses N(6)-acetyl-L-lysyl-[protein] + NAD(+) + H2O = 2''-O-acetyl-ADP-D-ribose + nicotinamide + L-lysyl-[protein]. NAD-dependent protein deacylase. Catalyzes the NAD-dependent hydrolysis of acyl groups from lysine residues. The polypeptide is NAD-dependent protein deacylase Sirt4 (Sirt4) (Drosophila melanogaster (Fruit fly)).